We begin with the raw amino-acid sequence, 247 residues long: Probable transcriptional regulatory protein lpg1286 (247 aa).

The protein belongs to the TACO1 family.

The protein resides in the cytoplasm. The chain is Probable transcriptional regulatory protein lpg1286 from Legionella pneumophila subsp. pneumophila (strain Philadelphia 1 / ATCC 33152 / DSM 7513).